The following is a 120-amino-acid chain: Large ribosomal subunit protein uL18 (120 aa).

This sequence belongs to the universal ribosomal protein uL18 family. Part of the 50S ribosomal subunit; part of the 5S rRNA/L5/L18/L25 subcomplex. Contacts the 5S and 23S rRNAs.

Its function is as follows. This is one of the proteins that bind and probably mediate the attachment of the 5S RNA into the large ribosomal subunit, where it forms part of the central protuberance. This chain is Large ribosomal subunit protein uL18, found in Bacillus cereus (strain AH820).